The primary structure comprises 556 residues: 2-succinyl-5-enolpyruvyl-6-hydroxy-3-cyclohexene-1-carboxylate synthase (556 aa).

It belongs to the TPP enzyme family. MenD subfamily. In terms of assembly, homodimer. The cofactor is Mg(2+). Mn(2+) serves as cofactor. It depends on thiamine diphosphate as a cofactor.

The enzyme catalyses isochorismate + 2-oxoglutarate + H(+) = 5-enolpyruvoyl-6-hydroxy-2-succinyl-cyclohex-3-ene-1-carboxylate + CO2. It participates in quinol/quinone metabolism; 1,4-dihydroxy-2-naphthoate biosynthesis; 1,4-dihydroxy-2-naphthoate from chorismate: step 2/7. The protein operates within quinol/quinone metabolism; menaquinone biosynthesis. Functionally, catalyzes the thiamine diphosphate-dependent decarboxylation of 2-oxoglutarate and the subsequent addition of the resulting succinic semialdehyde-thiamine pyrophosphate anion to isochorismate to yield 2-succinyl-5-enolpyruvyl-6-hydroxy-3-cyclohexene-1-carboxylate (SEPHCHC). This Salmonella typhimurium (strain LT2 / SGSC1412 / ATCC 700720) protein is 2-succinyl-5-enolpyruvyl-6-hydroxy-3-cyclohexene-1-carboxylate synthase.